Here is a 325-residue protein sequence, read N- to C-terminus: Probable 2-ketogluconate reductase (325 aa).

Residues 158 to 159 (RI), Thr211, 238 to 240 (ISR), and Asp264 each bind NAD(+). The active site involves Arg240. Residue Glu269 is part of the active site. The active-site Proton donor is His288. 288–291 (HIGS) contacts NAD(+).

It belongs to the D-isomer specific 2-hydroxyacid dehydrogenase family.

The enzyme catalyses D-gluconate + NADP(+) = 2-dehydro-D-gluconate + NADPH + H(+). This is Probable 2-ketogluconate reductase (yvcT) from Bacillus subtilis (strain 168).